Here is a 107-residue protein sequence, read N- to C-terminus: Transcriptional regulator Rv3488 (107 aa).

The Cd(2+) site is built by His16, Glu30, His34, and His101.

In terms of assembly, homodimer.

Its function is as follows. May have transcription regulation and metal-detoxifying functions through which it may enhance intracellular survival of mycobacteria. Binds to its own promoter region and to the Rv1999c promoter region. It displays strong affinity for cadmium ions, but can also bind zinc, manganese and nickel. Expression increases the intracellular survival of recombinant M.smegmatis in murine macrophage cell line and increases its tolerance to cadmium ions. This Mycobacterium tuberculosis (strain ATCC 25618 / H37Rv) protein is Transcriptional regulator Rv3488.